The following is a 467-amino-acid chain: 3-isopropylmalate dehydratase large subunit (467 aa).

[4Fe-4S] cluster is bound by residues C348, C409, and C412. The tract at residues 423 to 448 (NERSISTSNRNFEGRQGKGSRTHLAS) is disordered.

This sequence belongs to the aconitase/IPM isomerase family. LeuC type 1 subfamily. As to quaternary structure, heterodimer of LeuC and LeuD. [4Fe-4S] cluster is required as a cofactor.

The enzyme catalyses (2R,3S)-3-isopropylmalate = (2S)-2-isopropylmalate. It functions in the pathway amino-acid biosynthesis; L-leucine biosynthesis; L-leucine from 3-methyl-2-oxobutanoate: step 2/4. Catalyzes the isomerization between 2-isopropylmalate and 3-isopropylmalate, via the formation of 2-isopropylmaleate. The protein is 3-isopropylmalate dehydratase large subunit of Bifidobacterium longum (strain DJO10A).